The sequence spans 88 residues: Small ribosomal subunit protein uS17 (88 aa).

This sequence belongs to the universal ribosomal protein uS17 family. Part of the 30S ribosomal subunit.

In terms of biological role, one of the primary rRNA binding proteins, it binds specifically to the 5'-end of 16S ribosomal RNA. The polypeptide is Small ribosomal subunit protein uS17 (Ectopseudomonas mendocina (strain ymp) (Pseudomonas mendocina)).